The primary structure comprises 190 residues: Elongation factor P 2 (190 aa).

The protein belongs to the elongation factor P family.

It is found in the cytoplasm. Its pathway is protein biosynthesis; polypeptide chain elongation. In terms of biological role, involved in peptide bond synthesis. Stimulates efficient translation and peptide-bond synthesis on native or reconstituted 70S ribosomes in vitro. Probably functions indirectly by altering the affinity of the ribosome for aminoacyl-tRNA, thus increasing their reactivity as acceptors for peptidyl transferase. In Protochlamydia amoebophila (strain UWE25), this protein is Elongation factor P 2 (efp2).